A 101-amino-acid polypeptide reads, in one-letter code: Iron-sulfur cluster assembly protein CyaY (101 aa).

This sequence belongs to the frataxin family.

Functionally, involved in iron-sulfur (Fe-S) cluster assembly. May act as a regulator of Fe-S biogenesis. The chain is Iron-sulfur cluster assembly protein CyaY from Actinobacillus pleuropneumoniae serotype 7 (strain AP76).